Consider the following 545-residue polypeptide: Glucose-6-phosphate isomerase (545 aa).

Glutamate 351 acts as the Proton donor in catalysis. Catalysis depends on residues histidine 382 and lysine 510.

This sequence belongs to the GPI family.

The protein localises to the cytoplasm. The catalysed reaction is alpha-D-glucose 6-phosphate = beta-D-fructose 6-phosphate. It functions in the pathway carbohydrate biosynthesis; gluconeogenesis. It participates in carbohydrate degradation; glycolysis; D-glyceraldehyde 3-phosphate and glycerone phosphate from D-glucose: step 2/4. Catalyzes the reversible isomerization of glucose-6-phosphate to fructose-6-phosphate. The chain is Glucose-6-phosphate isomerase from Shewanella halifaxensis (strain HAW-EB4).